The chain runs to 233 residues: Ras-related protein Rab-20 (233 aa).

Gly17, Lys18, Thr19, Asp32, and Thr36 together coordinate GTP. Thr19 is a binding site for Mg(2+). 2 short sequence motifs (switch) span residues Arg28–Phe41 and Asp55–Gly72. Mg(2+) is bound by residues Thr36 and Asp55. The GTP site is built by Gly58, Asn113, Lys114, and Asp116. Residues Ser119–Gly130 show a composition bias toward basic and acidic residues. The disordered stretch occupies residues Ser119–Ser138. 2 residues coordinate GTP: Ala183 and Lys184. Residues Cys231 and Cys232 are each lipidated (S-geranylgeranyl cysteine).

The protein belongs to the small GTPase superfamily. Rab family. Requires Mg(2+) as cofactor. In terms of tissue distribution, present in a variety of tissues, but not in brain.

It is found in the cytoplasmic vesicle. Its subcellular location is the phagosome. The protein resides in the phagosome membrane. It localises to the golgi apparatus. The enzyme catalyses GTP + H2O = GDP + phosphate + H(+). With respect to regulation, regulated by guanine nucleotide exchange factors (GEFs) which promote the exchange of bound GDP for free GTP. Regulated by GTPase activating proteins (GAPs) which increase the GTP hydrolysis activity. Inhibited by GDP dissociation inhibitors (GDIs). Functionally, plays a role in apical endocytosis/recycling. Plays a role in the maturation and acidification of phagosomes that engulf pathogens, such as S.aureus and Mycobacterium. Plays a role in the fusion of phagosomes with lysosomes. The polypeptide is Ras-related protein Rab-20 (Mus musculus (Mouse)).